Here is a 695-residue protein sequence, read N- to C-terminus: F-box only protein 34 (695 aa).

Disordered stretches follow at residues 239–275 (GQSRGIPPAPEPFSAPETCEEPKEQENPETGRSQGEP), 316–373 (LTNG…CPSL), and 472–524 (GQDQ…PGGS). Residues 556 to 608 (QQYMACLPHHIIVKIFRLLPTLSLAILKCTCRYFKSIIEYYNIRPADSRWVRD) form the F-box domain.

As to quaternary structure, directly interacts with SKP1 and CUL1.

Substrate-recognition component of the SCF (SKP1-CUL1-F-box protein)-type E3 ubiquitin ligase complex. The polypeptide is F-box only protein 34 (Fbxo34) (Mus musculus (Mouse)).